The chain runs to 501 residues: Acetyl-coenzyme A carboxylase carboxyl transferase subunit beta, chloroplastic (501 aa).

The 271-residue stretch at 231–501 (LWIECENCYG…LIQNEKESRS (271 aa)) folds into the CoA carboxyltransferase N-terminal domain. Zn(2+) is bound by residues Cys-235, Cys-238, Cys-254, and Cys-257. The C4-type zinc-finger motif lies at 235–257 (CENCYGLNYKKILKSKMNICEHC).

It belongs to the AccD/PCCB family. As to quaternary structure, acetyl-CoA carboxylase is a heterohexamer composed of biotin carboxyl carrier protein, biotin carboxylase and 2 subunits each of ACCase subunit alpha and ACCase plastid-coded subunit beta (accD). The cofactor is Zn(2+).

The protein resides in the plastid. Its subcellular location is the chloroplast stroma. The catalysed reaction is N(6)-carboxybiotinyl-L-lysyl-[protein] + acetyl-CoA = N(6)-biotinyl-L-lysyl-[protein] + malonyl-CoA. It participates in lipid metabolism; malonyl-CoA biosynthesis; malonyl-CoA from acetyl-CoA: step 1/1. Its function is as follows. Component of the acetyl coenzyme A carboxylase (ACC) complex. Biotin carboxylase (BC) catalyzes the carboxylation of biotin on its carrier protein (BCCP) and then the CO(2) group is transferred by the transcarboxylase to acetyl-CoA to form malonyl-CoA. This is Acetyl-coenzyme A carboxylase carboxyl transferase subunit beta, chloroplastic from Lotus japonicus (Lotus corniculatus var. japonicus).